The primary structure comprises 401 residues: Argininosuccinate synthase (401 aa).

Residues 7 to 15 (AYSGGLDTS) and Ala34 contribute to the ATP site. L-citrulline is bound by residues Tyr85 and Ser90. Gly115 lines the ATP pocket. The L-aspartate site is built by Thr117, Asn121, and Asp122. Position 121 (Asn121) interacts with L-citrulline. L-citrulline contacts are provided by Arg125, Ser174, Ser183, Glu259, and Tyr271.

The protein belongs to the argininosuccinate synthase family. Type 1 subfamily. In terms of assembly, homotetramer.

It is found in the cytoplasm. It carries out the reaction L-citrulline + L-aspartate + ATP = 2-(N(omega)-L-arginino)succinate + AMP + diphosphate + H(+). It functions in the pathway amino-acid biosynthesis; L-arginine biosynthesis; L-arginine from L-ornithine and carbamoyl phosphate: step 2/3. In Desulfitobacterium hafniense (strain DSM 10664 / DCB-2), this protein is Argininosuccinate synthase.